Here is a 439-residue protein sequence, read N- to C-terminus: Choline monooxygenase, chloroplastic (439 aa).

The N-terminal 60 residues, Met1–Asn60, are a transit peptide targeting the chloroplast. Low complexity predominate over residues Asn24–Pro41. Positions Asn24–Pro54 are disordered. Residues Gln42–Pro54 are compositionally biased toward polar residues. Residues Trp120–Ile227 form the Rieske domain. Residues Cys162, His164, Cys181, and His184 each coordinate [2Fe-2S] cluster. Fe cation-binding residues include His287 and His292.

Homotrimer or homodimer. The cofactor is [2Fe-2S] cluster. Fe cation is required as a cofactor. It depends on Mg(2+) as a cofactor. Expressed in leaves.

The protein resides in the plastid. Its subcellular location is the chloroplast stroma. The catalysed reaction is choline + 2 reduced [2Fe-2S]-[ferredoxin] + O2 + 2 H(+) = betaine aldehyde hydrate + 2 oxidized [2Fe-2S]-[ferredoxin] + H2O. Its pathway is amine and polyamine biosynthesis; betaine biosynthesis via choline pathway; betaine aldehyde from choline (monooxygenase route): step 1/1. Its function is as follows. Catalyzes the first step of the osmoprotectant glycine betaine synthesis. The chain is Choline monooxygenase, chloroplastic (CMO) from Spinacia oleracea (Spinach).